The chain runs to 85 residues: uncharacterized protein (85 aa).

The protein belongs to the BolA/IbaG family.

This is an uncharacterized protein from Haemophilus influenzae (strain ATCC 51907 / DSM 11121 / KW20 / Rd).